We begin with the raw amino-acid sequence, 420 residues long: Pyridinium-3,5-bisthiocarboxylic acid mononucleotide nickel insertion protein (420 aa).

It belongs to the LarC family.

It catalyses the reaction Ni(II)-pyridinium-3,5-bisthiocarboxylate mononucleotide = pyridinium-3,5-bisthiocarboxylate mononucleotide + Ni(2+). Functionally, involved in the biosynthesis of a nickel-pincer cofactor ((SCS)Ni(II) pincer complex). Binds Ni(2+), and functions in nickel delivery to pyridinium-3,5-bisthiocarboxylic acid mononucleotide (P2TMN), to form the mature cofactor. Is required for the activation of the lactate racemase LarA. May also be involved in the activation of other nickel-pincer cofactor-dependent enzymes. The chain is Pyridinium-3,5-bisthiocarboxylic acid mononucleotide nickel insertion protein from Lactiplantibacillus plantarum (strain ATCC BAA-793 / NCIMB 8826 / WCFS1) (Lactobacillus plantarum).